Reading from the N-terminus, the 104-residue chain is Large ribosomal subunit protein uL24 (104 aa).

The protein belongs to the universal ribosomal protein uL24 family. Part of the 50S ribosomal subunit.

Its function is as follows. One of two assembly initiator proteins, it binds directly to the 5'-end of the 23S rRNA, where it nucleates assembly of the 50S subunit. In terms of biological role, one of the proteins that surrounds the polypeptide exit tunnel on the outside of the subunit. The protein is Large ribosomal subunit protein uL24 of Herminiimonas arsenicoxydans.